We begin with the raw amino-acid sequence, 513 residues long: MSDTTLEKIIVLDYGSQYNQLIARRIREIGVFSELMSHKVTAKEIREINPIGIILSGGPNSVYDEGSFDIDPEIFELGLPVLGICYGMQLMSYKLGGMVEAAGEREYGVAPLQLTEKSALFAGTPEVQDVLMSHGDRVTAIPEGFHVVGTSPNSPFAAVENTERNLYGIQFHPEVRHSVHGTEMLRNFALNTCGAKGNWSMENFIDMQIKDVREKVGDKKVLLGLSGGVDSSVVGVLLQRAIGDQLTSIFVDHGFLRKGEADQVMETLGGKFGLNIIKVDAQKRFMDKLVGLSDPETKRKIIGNEFVYVFDDEANKLEGVDFLAQGTLYTDVIESGTDTAQTIKSHHNVGGLPEDMQFQLIEPLNTLFKDEVRALGTQLGMPDEIVWRQPFPGPGLAIRVLGDLTEEKLETVRESDAILREEIAASGLERDVWQYFTVNTDVKSVGVMGDQRTYDYTLAIRAITSIDGMTADFAQLPWDLLQKISKRIVNEVDHVNRIVYDITSKPPATVEWQ.

Positions 8 to 198 constitute a Glutamine amidotransferase type-1 domain; the sequence is KIIVLDYGSQ…ALNTCGAKGN (191 aa). Cys85 (nucleophile) is an active-site residue. Residues His172 and Glu174 contribute to the active site. A GMPS ATP-PPase domain is found at 199–388; that stretch reads WSMENFIDMQ…LGMPDEIVWR (190 aa). Residue 226 to 232 coordinates ATP; that stretch reads SGGVDSS.

Homodimer.

It carries out the reaction XMP + L-glutamine + ATP + H2O = GMP + L-glutamate + AMP + diphosphate + 2 H(+). It participates in purine metabolism; GMP biosynthesis; GMP from XMP (L-Gln route): step 1/1. Its function is as follows. Catalyzes the synthesis of GMP from XMP. This is GMP synthase [glutamine-hydrolyzing] from Lactococcus lactis subsp. cremoris (strain SK11).